A 471-amino-acid chain; its full sequence is 1,3-beta-glucanosyltransferase GAS4 (471 aa).

The N-terminal stretch at 1–21 (MMVFSSTFIFLILELVVLCEA) is a signal peptide. The cysteines at positions 70 and 99 are disulfide-linked. Residue tyrosine 88 coordinates (1,3-beta-D-glucosyl)n. Asparagine 151 carries an N-linked (GlcNAc...) asparagine glycan. (1,3-beta-D-glucosyl)n-binding residues include asparagine 160, glutamate 161, aspartate 203, and arginine 208. Glutamate 161 serves as the catalytic Proton donor. 2 disulfides stabilise this stretch: cysteine 217/cysteine 354 and cysteine 238/cysteine 269. Glutamate 266 serves as the catalytic Nucleophile. Position 298 (tyrosine 298) interacts with (1,3-beta-D-glucosyl)n. The N-linked (GlcNAc...) asparagine glycan is linked to asparagine 398. Residue asparagine 447 is the site of GPI-anchor amidated asparagine attachment. Residues 448 to 471 (SASISGPLLPLGLCLLFFTFSLFF) constitute a propeptide, removed in mature form.

The protein belongs to the glycosyl hydrolase 72 family.

Its subcellular location is the cell membrane. Its function is as follows. Splits internally a 1,3-beta-glucan molecule and transfers the newly generated reducing end (the donor) to the non-reducing end of another 1,3-beta-glucan molecule (the acceptor) forming a 1,3-beta linkage, resulting in the elongation of 1,3-beta-glucan chains in the cell wall. Involved in spore wall assembly. The sequence is that of 1,3-beta-glucanosyltransferase GAS4 (GAS4) from Saccharomyces cerevisiae (strain ATCC 204508 / S288c) (Baker's yeast).